A 720-amino-acid polypeptide reads, in one-letter code: DNA ligase (720 aa).

NAD(+) is bound by residues 57-61 (DAEYD), 106-107 (SL), and Glu-140. Lys-142 serves as the catalytic N6-AMP-lysine intermediate. NAD(+) contacts are provided by Arg-163, Glu-200, Lys-316, and Lys-340. Residues Cys-434, Cys-437, Cys-458, and Cys-464 each coordinate Zn(2+). The BRCT domain maps to 643–720 (AAASPVSGKT…TEDEWFELVG (78 aa)).

Belongs to the NAD-dependent DNA ligase family. LigA subfamily. Mg(2+) is required as a cofactor. Requires Mn(2+) as cofactor.

It catalyses the reaction NAD(+) + (deoxyribonucleotide)n-3'-hydroxyl + 5'-phospho-(deoxyribonucleotide)m = (deoxyribonucleotide)n+m + AMP + beta-nicotinamide D-nucleotide.. Its function is as follows. DNA ligase that catalyzes the formation of phosphodiester linkages between 5'-phosphoryl and 3'-hydroxyl groups in double-stranded DNA using NAD as a coenzyme and as the energy source for the reaction. It is essential for DNA replication and repair of damaged DNA. The polypeptide is DNA ligase (Xanthobacter autotrophicus (strain ATCC BAA-1158 / Py2)).